Reading from the N-terminus, the 966-residue chain is Aminopeptidase N (966 aa).

At 1 to 8 (MAKGFYIS) the chain is on the cytoplasmic side. A helical; Signal-anchor for type II membrane protein membrane pass occupies residues 9-32 (KSLGILGILLGVAALCTIVALSVV). The segment at 33–65 (YRQEKNKNTSQSPSMAPLNPTATSSPATTLDQN) is cytosolic Ser/Thr-rich junction. Over 33–966 (YRQEKNKNTS…VLAWFTANSA (934 aa)) the chain is Extracellular. N-linked (GlcNAc...) asparagine glycans are attached at residues Asn40 and Asn125. Residues 40–61 (NTSQSPSMAPLNPTATSSPATT) form a disordered region. Residues 66–966 (LPWNRYRLPK…VLAWFTANSA (901 aa)) are metalloprotease. At Tyr173 the chain carries Sulfotyrosine. N-linked (GlcNAc...) asparagine glycans are attached at residues Asn259 and Asn315. Residue 348–352 (GAMEN) participates in substrate binding. His384 is a Zn(2+) binding site. The Proton acceptor role is filled by Glu385. Residues His388 and Glu407 each contribute to the Zn(2+) site. Sulfotyrosine is present on residues Tyr415 and Tyr420. Residues Asn552, Asn570, Asn624, and Asn734 are each glycosylated (N-linked (GlcNAc...) asparagine). Disulfide bonds link Cys760/Cys767 and Cys797/Cys833. Residue Asn817 is glycosylated (N-linked (GlcNAc...) asparagine). At Tyr852 the chain carries Phosphotyrosine. Tyr912 is subject to Sulfotyrosine.

This sequence belongs to the peptidase M1 family. Homodimer. Interacts with SLC6A19. The cofactor is Zn(2+). Post-translationally, sulfated. N- and O-glycosylated. In terms of processing, may undergo proteolysis and give rise to a soluble form.

It localises to the cell membrane. The enzyme catalyses Release of an N-terminal amino acid, Xaa-|-Yaa- from a peptide, amide or arylamide. Xaa is preferably Ala, but may be most amino acids including Pro (slow action). When a terminal hydrophobic residue is followed by a prolyl residue, the two may be released as an intact Xaa-Pro dipeptide.. Broad specificity aminopeptidase which plays a role in the final digestion of peptides generated from hydrolysis of proteins by gastric and pancreatic proteases. Also involved in the processing of various peptides including peptide hormones, such as angiotensin III and IV, neuropeptides, and chemokines. May also be involved the cleavage of peptides bound to major histocompatibility complex class II molecules of antigen presenting cells. May have a role in angiogenesis and promote cholesterol crystallization. May have a role in amino acid transport by acting as binding partner of amino acid transporter SLC6A19 and regulating its activity. This chain is Aminopeptidase N (ANPEP), found in Oryctolagus cuniculus (Rabbit).